Here is an 821-residue protein sequence, read N- to C-terminus: Leucine--tRNA ligase (821 aa).

A 'HIGH' region motif is present at residues P44 to H54. Positions K589 to S593 match the 'KMSKS' region motif. Position 592 (K592) interacts with ATP.

It belongs to the class-I aminoacyl-tRNA synthetase family.

It localises to the cytoplasm. It carries out the reaction tRNA(Leu) + L-leucine + ATP = L-leucyl-tRNA(Leu) + AMP + diphosphate. This chain is Leucine--tRNA ligase, found in Campylobacter curvus (strain 525.92).